Reading from the N-terminus, the 244-residue chain is MSKLDLNALNELPKVDRILALAETNAQLEKLDAEGRVAWALDNLPGEYVLSSSFGIQAAVSLHLVNQIRPDIPVILTDTGYLFPETYRFIDELTDKLKLNLKVYRATESAAWQEARYGKLWEQGVEGIEKYNDINKVEPMNRALKELNAQTWFAGLRREQSGSRANLPVLAIQRGVFKVLPIIDWDNRTIYQYLQKNGLKYHPLWDEGYLSVGDTHTTRKWEPGMAEEETRFFGLKRECGLHEG.

Catalysis depends on Cys-239, which acts as the Nucleophile; cysteine thiosulfonate intermediate.

Belongs to the PAPS reductase family. CysH subfamily.

It is found in the cytoplasm. It carries out the reaction [thioredoxin]-disulfide + sulfite + adenosine 3',5'-bisphosphate + 2 H(+) = [thioredoxin]-dithiol + 3'-phosphoadenylyl sulfate. The protein operates within sulfur metabolism; hydrogen sulfide biosynthesis; sulfite from sulfate: step 3/3. Catalyzes the formation of sulfite from phosphoadenosine 5'-phosphosulfate (PAPS) using thioredoxin as an electron donor. The chain is Phosphoadenosine 5'-phosphosulfate reductase from Escherichia coli O157:H7.